The following is a 313-amino-acid chain: Tyrosine--tRNA ligase (313 aa).

Residue Tyr32 participates in L-tyrosine binding. The 'HIGH' region motif lies at 37–45; the sequence is PSGEIHLGH. Tyr152, Gln156, Asp159, and Gln174 together coordinate L-tyrosine. The 'KMSKS' region motif lies at 208–212; that stretch reads KMSSS. Residue Ser211 coordinates ATP.

It belongs to the class-I aminoacyl-tRNA synthetase family. TyrS type 3 subfamily. In terms of assembly, homodimer.

The protein resides in the cytoplasm. The enzyme catalyses tRNA(Tyr) + L-tyrosine + ATP = L-tyrosyl-tRNA(Tyr) + AMP + diphosphate + H(+). Functionally, catalyzes the attachment of tyrosine to tRNA(Tyr) in a two-step reaction: tyrosine is first activated by ATP to form Tyr-AMP and then transferred to the acceptor end of tRNA(Tyr). The protein is Tyrosine--tRNA ligase of Methanospirillum hungatei JF-1 (strain ATCC 27890 / DSM 864 / NBRC 100397 / JF-1).